We begin with the raw amino-acid sequence, 20 residues long: Dihydrolipoamide-residue succinyltransferase component of 2-oxoglutarate dehydrogenase complex (20 aa).

This sequence belongs to the 2-oxoacid dehydrogenase family. As to quaternary structure, forms a 24-polypeptide structural core with octahedral symmetry. (R)-lipoate is required as a cofactor.

The protein localises to the mitochondrion membrane. The enzyme catalyses N(6)-[(R)-dihydrolipoyl]-L-lysyl-[protein] + succinyl-CoA = N(6)-[(R)-S(8)-succinyldihydrolipoyl]-L-lysyl-[protein] + CoA. Its pathway is amino-acid degradation; L-lysine degradation via saccharopine pathway; glutaryl-CoA from L-lysine: step 6/6. Functionally, the 2-oxoglutarate dehydrogenase complex catalyzes the overall conversion of 2-oxoglutarate to succinyl-CoA and CO(2). It contains multiple copies of three enzymatic components: 2-oxoglutarate dehydrogenase (E1), dihydrolipoamide succinyltransferase (E2) and lipoamide dehydrogenase (E3). The sequence is that of Dihydrolipoamide-residue succinyltransferase component of 2-oxoglutarate dehydrogenase complex from Solanum tuberosum (Potato).